The sequence spans 746 residues: Polyribonucleotide nucleotidyltransferase (746 aa).

The Mg(2+) site is built by D519 and D525. Positions 585–644 (PRVIAVKIPVDKIGEVIGPKGKMINQIQEDTGADISIEDDGTVYIGATNGPSADAARSAI) constitute a KH domain. The S1 motif domain maps to 656 to 728 (GERYLGTVVK…DRGKLSLSPV (73 aa)).

This sequence belongs to the polyribonucleotide nucleotidyltransferase family. The cofactor is Mg(2+).

The protein localises to the cytoplasm. The enzyme catalyses RNA(n+1) + phosphate = RNA(n) + a ribonucleoside 5'-diphosphate. Functionally, involved in mRNA degradation. Catalyzes the phosphorolysis of single-stranded polyribonucleotides processively in the 3'- to 5'-direction. The sequence is that of Polyribonucleotide nucleotidyltransferase from Arthrobacter sp. (strain FB24).